Here is a 72-residue protein sequence, read N- to C-terminus: Cytochrome c oxidase subunit 2 (72 aa).

Over 1-14 (MAHPSQLGFQDAAS) the chain is Mitochondrial intermembrane. A helical membrane pass occupies residues 15–45 (PVMEELLHFHDHALMIVFLISTLVLYIIVAM). The Mitochondrial matrix segment spans residues 46-72 (VSTKLTNKYXLDSQEIEVIWTXLPAVI).

Belongs to the cytochrome c oxidase subunit 2 family. Component of the cytochrome c oxidase (complex IV, CIV), a multisubunit enzyme composed of 14 subunits. The complex is composed of a catalytic core of 3 subunits MT-CO1, MT-CO2 and MT-CO3, encoded in the mitochondrial DNA, and 11 supernumerary subunits COX4I, COX5A, COX5B, COX6A, COX6B, COX6C, COX7A, COX7B, COX7C, COX8 and NDUFA4, which are encoded in the nuclear genome. The complex exists as a monomer or a dimer and forms supercomplexes (SCs) in the inner mitochondrial membrane with NADH-ubiquinone oxidoreductase (complex I, CI) and ubiquinol-cytochrome c oxidoreductase (cytochrome b-c1 complex, complex III, CIII), resulting in different assemblies (supercomplex SCI(1)III(2)IV(1) and megacomplex MCI(2)III(2)IV(2)). Found in a complex with TMEM177, COA6, COX18, COX20, SCO1 and SCO2. Interacts with TMEM177 in a COX20-dependent manner. Interacts with COX20. Interacts with COX16. The cofactor is Cu cation.

It is found in the mitochondrion inner membrane. It catalyses the reaction 4 Fe(II)-[cytochrome c] + O2 + 8 H(+)(in) = 4 Fe(III)-[cytochrome c] + 2 H2O + 4 H(+)(out). Functionally, component of the cytochrome c oxidase, the last enzyme in the mitochondrial electron transport chain which drives oxidative phosphorylation. The respiratory chain contains 3 multisubunit complexes succinate dehydrogenase (complex II, CII), ubiquinol-cytochrome c oxidoreductase (cytochrome b-c1 complex, complex III, CIII) and cytochrome c oxidase (complex IV, CIV), that cooperate to transfer electrons derived from NADH and succinate to molecular oxygen, creating an electrochemical gradient over the inner membrane that drives transmembrane transport and the ATP synthase. Cytochrome c oxidase is the component of the respiratory chain that catalyzes the reduction of oxygen to water. Electrons originating from reduced cytochrome c in the intermembrane space (IMS) are transferred via the dinuclear copper A center (CU(A)) of subunit 2 and heme A of subunit 1 to the active site in subunit 1, a binuclear center (BNC) formed by heme A3 and copper B (CU(B)). The BNC reduces molecular oxygen to 2 water molecules using 4 electrons from cytochrome c in the IMS and 4 protons from the mitochondrial matrix. The polypeptide is Cytochrome c oxidase subunit 2 (mt-co2) (Gomphosus varius (Bird wrasse)).